Here is a 57-residue protein sequence, read N- to C-terminus: COP9 signalosome complex subunit 9 (57 aa).

Belongs to the CSN9 family. As to quaternary structure, component of the CSN complex, probably composed of cops1, cops2, cops3, cops4, cops5, cops6, cops7, cops8 and cops9.

The protein localises to the nucleus. It localises to the cytoplasm. Its subcellular location is the nucleoplasm. Functionally, component of the COP9 signalosome complex (CSN), a complex involved in various cellular and developmental processes. The CSN complex is an essential regulator of the ubiquitin (Ubl) conjugation pathway by mediating the deneddylation of the cullin subunits of SCF-type E3 ligase complexes, leading to decrease the Ubl ligase activity. May play a role in cell proliferation. This chain is COP9 signalosome complex subunit 9, found in Xenopus tropicalis (Western clawed frog).